Consider the following 227-residue polypeptide: Cytochrome c oxidase subunit 2 (227 aa).

The Mitochondrial intermembrane portion of the chain corresponds to 1 to 14 (MAYPLQLGLQDATS). The chain crosses the membrane as a helical span at residues 15-45 (PIMEELMNFHDHTLMIVFLISSLVLYIISLM). At 46–59 (LTTKLTHTSTMDAQ) the chain is on the mitochondrial matrix side. A helical membrane pass occupies residues 60 to 87 (EVETIWTILPAVILIMIALPSLRILYMM). Residues 88-227 (DEINNPVLTV…HFENWSASMI (140 aa)) are Mitochondrial intermembrane-facing. Cu cation contacts are provided by histidine 161, cysteine 196, glutamate 198, cysteine 200, histidine 204, and methionine 207. Glutamate 198 contributes to the Mg(2+) binding site.

It belongs to the cytochrome c oxidase subunit 2 family. Component of the cytochrome c oxidase (complex IV, CIV), a multisubunit enzyme composed of 14 subunits. The complex is composed of a catalytic core of 3 subunits MT-CO1, MT-CO2 and MT-CO3, encoded in the mitochondrial DNA, and 11 supernumerary subunits COX4I, COX5A, COX5B, COX6A, COX6B, COX6C, COX7A, COX7B, COX7C, COX8 and NDUFA4, which are encoded in the nuclear genome. The complex exists as a monomer or a dimer and forms supercomplexes (SCs) in the inner mitochondrial membrane with NADH-ubiquinone oxidoreductase (complex I, CI) and ubiquinol-cytochrome c oxidoreductase (cytochrome b-c1 complex, complex III, CIII), resulting in different assemblies (supercomplex SCI(1)III(2)IV(1) and megacomplex MCI(2)III(2)IV(2)). Found in a complex with TMEM177, COA6, COX18, COX20, SCO1 and SCO2. Interacts with TMEM177 in a COX20-dependent manner. Interacts with COX20. Interacts with COX16. Requires Cu cation as cofactor.

The protein resides in the mitochondrion inner membrane. It carries out the reaction 4 Fe(II)-[cytochrome c] + O2 + 8 H(+)(in) = 4 Fe(III)-[cytochrome c] + 2 H2O + 4 H(+)(out). In terms of biological role, component of the cytochrome c oxidase, the last enzyme in the mitochondrial electron transport chain which drives oxidative phosphorylation. The respiratory chain contains 3 multisubunit complexes succinate dehydrogenase (complex II, CII), ubiquinol-cytochrome c oxidoreductase (cytochrome b-c1 complex, complex III, CIII) and cytochrome c oxidase (complex IV, CIV), that cooperate to transfer electrons derived from NADH and succinate to molecular oxygen, creating an electrochemical gradient over the inner membrane that drives transmembrane transport and the ATP synthase. Cytochrome c oxidase is the component of the respiratory chain that catalyzes the reduction of oxygen to water. Electrons originating from reduced cytochrome c in the intermembrane space (IMS) are transferred via the dinuclear copper A center (CU(A)) of subunit 2 and heme A of subunit 1 to the active site in subunit 1, a binuclear center (BNC) formed by heme A3 and copper B (CU(B)). The BNC reduces molecular oxygen to 2 water molecules using 4 electrons from cytochrome c in the IMS and 4 protons from the mitochondrial matrix. The sequence is that of Cytochrome c oxidase subunit 2 (MT-CO2) from Zelotomys hildegardeae (Hildegarde's broad-headed mouse).